The chain runs to 695 residues: IQ domain-containing protein E (695 aa).

The interval 29–55 (KAKRKAFHKPPPTSPKSPYLSKPRKVA) is disordered. Coiled coils occupy residues 157 to 264 (LHVQ…RLQT), 292 to 358 (SALL…SSKS), and 387 to 477 (NKDH…CPEV). S322 carries the post-translational modification Phosphoserine. Disordered stretches follow at residues 357–390 (KSHA…NKDH), 465–521 (EMKK…RRDA), 564–599 (ASKA…TGSP), and 618–695 (RARH…NFPV). Over residues 465-482 (EMKKEEKEDCPEVPHKAQ) the composition is skewed to basic and acidic residues. 2 IQ domains span residues 542–571 (LDEA…HGSE) and 601–630 (QEEA…RTTT).

As to quaternary structure, component of the EvC complex composed of EFCAB7, IQCE, EVC2 and EVC; built from two subcomplexes, EVC2:EVC and EFCAB7:IQCE. Interacts (via N-terminus) with EFCAB7 (via EF-hands 1 and 2); this interaction anchors the EVC-EVC2 complex in a signaling microdomain at the base of cilia and stimulates the Hedgehog (Hh) pathway. Interacts with EVC2 (via N-terminal end). Interacts with EVC.

The protein resides in the cell projection. It is found in the cilium membrane. In terms of biological role, component of the EvC complex that positively regulates ciliary Hedgehog (Hh) signaling. Required for proper limb morphogenesis. In Homo sapiens (Human), this protein is IQ domain-containing protein E (IQCE).